We begin with the raw amino-acid sequence, 125 residues long: Large ribosomal subunit protein bL19 (125 aa).

It belongs to the bacterial ribosomal protein bL19 family.

Its function is as follows. This protein is located at the 30S-50S ribosomal subunit interface and may play a role in the structure and function of the aminoacyl-tRNA binding site. This is Large ribosomal subunit protein bL19 from Synechococcus sp. (strain JA-2-3B'a(2-13)) (Cyanobacteria bacterium Yellowstone B-Prime).